We begin with the raw amino-acid sequence, 155 residues long: Ribonuclease H (155 aa).

The 142-residue stretch at 1–142 (MTKQVEIFTD…CDELARAAAM (142 aa)) folds into the RNase H type-1 domain. Residues Asp10, Glu48, Asp70, and Asp134 each contribute to the Mg(2+) site.

Belongs to the RNase H family. As to quaternary structure, monomer. The cofactor is Mg(2+).

The protein localises to the cytoplasm. It carries out the reaction Endonucleolytic cleavage to 5'-phosphomonoester.. Endonuclease that specifically degrades the RNA of RNA-DNA hybrids. This chain is Ribonuclease H, found in Enterobacter sp. (strain 638).